Reading from the N-terminus, the 307-residue chain is MATINMTPGDLELGRDRGRIGKPIEIPLLENFGFDSQLGPFYLGFWNAVAYITGGIFTFIWLMVMFAQVNYNPVAFAKYFVVLQIDPPSSRYGLSFPPLNEGGWWLIATFFLTVSIFAWYMHIYTRAKALGIKPYLAYGFTGAIALYLVIYIIRPVWMGDWSEAPAHGIKALLDWTNNVSVRYGNFYYNPFHMLSIFFLLGSTLLLAMHAGTIWALEKYAAHEEWNEIQAPGTGTERAQLFWRWCMGFNANAYSIHLWAFWFAWLCGITGALGVFFSMPDFVNNWFQWGIEAGINYPQGPTPPVSLP.

A Blocked amino end (Ala) modification is found at alanine 2. Transmembrane regions (helical) follow at residues 45–69 (FWNA…FAQV), 103–123 (GWWL…YMHI), and 133–153 (KPYL…IYII). (7R,8Z)-bacteriochlorophyll b is bound at residue histidine 192. Residues 196–216 (IFFLLGSTLLLAMHAGTIWAL) traverse the membrane as a helical segment. 3 residues coordinate Fe cation: histidine 209, glutamate 236, and histidine 256. The chain crosses the membrane as a helical span at residues 257–277 (LWAFWFAWLCGITGALGVFFS).

This sequence belongs to the reaction center PufL/M/PsbA/D family. As to quaternary structure, reaction center is composed of four bacteriochlorophylls, two bacteriopheophytins, two ubiquinones, one iron, and two highly hydrophobic polypeptide chains (designated L and M).

It is found in the cell membrane. In terms of biological role, the reaction center is a membrane-bound complex that mediates the initial photochemical event in the electron transfer process of photosynthesis. The polypeptide is Reaction center protein M chain (pufM) (Chloroflexus aurantiacus (strain ATCC 29366 / DSM 635 / J-10-fl)).